A 145-amino-acid chain; its full sequence is Large ribosomal subunit protein uL15 (145 aa).

A disordered region spans residues 1 to 50; it reads MLHTIKPVTNARKSTKRLGRGPGSGTGKTSGKGHKGQLARSGKTLRPGFE. Gly residues predominate over residues 20–30; that stretch reads RGPGSGTGKTS.

Belongs to the universal ribosomal protein uL15 family. As to quaternary structure, part of the 50S ribosomal subunit.

Functionally, binds to the 23S rRNA. This is Large ribosomal subunit protein uL15 from Aster yellows witches'-broom phytoplasma (strain AYWB).